The sequence spans 155 residues: ATP synthase assembly factor FMC1, mitochondrial (155 aa).

Belongs to the FMC1 family.

It is found in the mitochondrion. Needed for the assembly of the mitochondrial F1-F0 complex at high temperature. This Saccharomyces cerevisiae (strain ATCC 204508 / S288c) (Baker's yeast) protein is ATP synthase assembly factor FMC1, mitochondrial (FMC1).